The primary structure comprises 355 residues: UPF0324 membrane protein PA5383 (355 aa).

Transmembrane regions (helical) follow at residues 20–37 (IPGL…ILLG), 44–66 (HNGI…TLYP), 71–93 (GSAA…LYGL), 100–122 (IAGV…FGLA), 137–159 (TLLI…EPVV), 166–188 (VAVA…PALF), 233–255 (AVIA…SAWL), 275–297 (WFAV…PALV), 307–324 (LLAM…LSAI), and 331–353 (PLLL…TRLA).

This sequence belongs to the UPF0324 family.

Its subcellular location is the cell membrane. The sequence is that of UPF0324 membrane protein PA5383 from Pseudomonas aeruginosa (strain ATCC 15692 / DSM 22644 / CIP 104116 / JCM 14847 / LMG 12228 / 1C / PRS 101 / PAO1).